The following is a 291-amino-acid chain: Malolactic fermentation system transcriptional activator (291 aa).

The region spanning 1–60 (MSLNLRDLEYFYQLSKLRSFTNVAKHFRVSQPTISYAIKRLETYYDCDLFYKDSSHQVVD) is the HTH lysR-type domain. A DNA-binding region (H-T-H motif) is located at residues 20 to 39 (FTNVAKHFRVSQPTISYAIK).

It belongs to the LysR transcriptional regulatory family.

It is found in the cytoplasm. Functionally, required for malolactic fermentation. It is most probably a transcriptional activator. This is Malolactic fermentation system transcriptional activator (mleR) from Lactococcus lactis subsp. lactis (strain IL1403) (Streptococcus lactis).